We begin with the raw amino-acid sequence, 297 residues long: MATH domain and coiled-coil domain-containing protein At2g05420 (297 aa).

The region spanning 7 to 139 (SKTITWVIEN…NGELTLVAKV (133 aa)) is the MATH domain. Positions 239-281 (KLDWLEKKHGEIKEKKKKEEASLKRLQEMEKQIFNEAQIYKEK) form a coiled coil.

The chain is MATH domain and coiled-coil domain-containing protein At2g05420 from Arabidopsis thaliana (Mouse-ear cress).